Consider the following 179-residue polypeptide: Peptidyl-tRNA hydrolase (179 aa).

TRNA is bound at residue Tyr15. His20 functions as the Proton acceptor in the catalytic mechanism. Residues Tyr66, Asn68, and Asn114 each coordinate tRNA.

Belongs to the PTH family. In terms of assembly, monomer.

It localises to the cytoplasm. It catalyses the reaction an N-acyl-L-alpha-aminoacyl-tRNA + H2O = an N-acyl-L-amino acid + a tRNA + H(+). Hydrolyzes ribosome-free peptidyl-tRNAs (with 1 or more amino acids incorporated), which drop off the ribosome during protein synthesis, or as a result of ribosome stalling. In terms of biological role, catalyzes the release of premature peptidyl moieties from peptidyl-tRNA molecules trapped in stalled 50S ribosomal subunits, and thus maintains levels of free tRNAs and 50S ribosomes. This is Peptidyl-tRNA hydrolase from Chlamydia trachomatis serovar L2 (strain ATCC VR-902B / DSM 19102 / 434/Bu).